The primary structure comprises 363 residues: Chemerin-like receptor 1 (363 aa).

Residues 1 to 39 (MDFEDYNSTYEDSYTDDFDTIVALEEFSPLEGRVVRIFL) lie on the Extracellular side of the membrane. Residue asparagine 7 is glycosylated (N-linked (GlcNAc...) asparagine). A helical transmembrane segment spans residues 40–60 (VVVYSIICFLGILGNGLVIVI). The Cytoplasmic portion of the chain corresponds to 61–71 (ATFKMKKTVNT). The helical transmembrane segment at 72–92 (VWFLNLAVADFLFNVFLPIHI) threads the bilayer. The Extracellular segment spans residues 93-109 (AYAAMDYHWVFGTAMCK). A disulfide bridge connects residues cysteine 108 and cysteine 185. The helical transmembrane segment at 110–130 (ISNFLLIHNMYTSVFLLTVIS) threads the bilayer. Topologically, residues 131–152 (FDRCISVLLPVWSQNHRSIRLA) are cytoplasmic. The chain crosses the membrane as a helical span at residues 153-173 (YMACVVIWVLAFFLSSPSLVF). At 174-220 (RDTAHLHGKISCFNNFSLSATSSSSWPTHPQMDTVGFGRQMVVTITR) the chain is on the extracellular side. Residue asparagine 188 is glycosylated (N-linked (GlcNAc...) asparagine). Residues 221–241 (FLCGFLVPVLIISACYFTIVY) traverse the membrane as a helical segment. The Cytoplasmic segment spans residues 242 to 256 (KLRRNRLAKTKKPFK). Residues 257 to 277 (IIVTIIITFFLCWCPYHTLYL) form a helical membrane-spanning segment. Topologically, residues 278–283 (LELHHR) are extracellular. The helical transmembrane segment at 284–304 (AMPGSVFSLGVPLATAIAIAN) threads the bilayer. Over 305–363 (SCMNPILYVFMGQDFKKFKVALFSRLVNALSEDTGHSSYPSHRSFTKMSSMNERETSML) the chain is Cytoplasmic. Phosphoserine is present on serine 335. The interval 337–363 (DTGHSSYPSHRSFTKMSSMNERETSML) is disordered. Threonine 338 carries the post-translational modification Phosphothreonine. Over residues 340 to 355 (HSSYPSHRSFTKMSSM) the composition is skewed to polar residues. A phosphoserine mark is found at serine 345, serine 348, and serine 354.

The protein belongs to the chemokine-like receptor (CMKLR) family. In terms of tissue distribution, predominantly expressed in spleen and temperately in adipose tissue.

It localises to the cell membrane. Functionally, receptor for the chemoattractant adipokine chemerin/RARRES2 and for the omega-3 fatty acid derived molecule resolvin E1. Interaction with RARRES2 initiates activation of G proteins G(i)/G(o) and beta-arrestin pathways inducing cellular responses via second messenger pathways such as intracellular calcium mobilization, phosphorylation of MAP kinases MAPK1/MAPK3 (ERK1/2), TYRO3, MAPK14/P38MAPK and PI3K leading to multifunctional effects, like, reduction of immune responses, enhancing of adipogenesis and angionesis. Resolvin E1 down-regulates cytokine production in macrophages by reducing the activation of MAPK1/3 (ERK1/2) and NF-kappa-B. Positively regulates adipogenesis and adipocyte metabolism. The chain is Chemerin-like receptor 1 (CMLKR1) from Sus scrofa (Pig).